Here is a 288-residue protein sequence, read N- to C-terminus: Cyclin-dependent kinase 2 homolog (288 aa).

The Protein kinase domain maps to 4-284 (YHGLEKIGEG…AKQAIEHPYF (281 aa)). Residues 10-18 (IGEGTYGVV) and Lys-32 contribute to the ATP site. A Phosphothreonine modification is found at Thr-14. Position 15 is a phosphotyrosine (Tyr-15). The active-site Proton acceptor is the Asp-125. Thr-158 bears the Phosphothreonine mark.

The protein belongs to the protein kinase superfamily. CMGC Ser/Thr protein kinase family. CDC2/CDKX subfamily. As to quaternary structure, may form a complex composed of at least the catalytic subunit CRK2 and a cyclin. Mg(2+) serves as cofactor.

It is found in the cytoplasm. It carries out the reaction L-seryl-[protein] + ATP = O-phospho-L-seryl-[protein] + ADP + H(+). It catalyses the reaction L-threonyl-[protein] + ATP = O-phospho-L-threonyl-[protein] + ADP + H(+). The catalysed reaction is [DNA-directed RNA polymerase] + ATP = phospho-[DNA-directed RNA polymerase] + ADP + H(+). Its activity is regulated as follows. Phosphorylation at Thr-14 or Tyr-15 inactivates the enzyme, while phosphorylation at Thr-158 activates it. Serine/threonine-protein kinase. Involved in the control of the cell cycle. Required for entry into S-phase and mitosis. Probable component of the kinase complex that phosphorylates the repetitive C-terminus of RNA polymerase II. This is Cyclin-dependent kinase 2 homolog from Plasmodium berghei (strain Anka).